The primary structure comprises 213 residues: Small ribosomal subunit protein eS1 (213 aa).

The disordered stretch occupies residues 189–213 (ARPEEVAAEEETAVDVDEEDVDVEA). Residues 194–213 (VAAEEETAVDVDEEDVDVEA) are compositionally biased toward acidic residues.

It belongs to the eukaryotic ribosomal protein eS1 family.

The polypeptide is Small ribosomal subunit protein eS1 (Haloarcula marismortui (strain ATCC 43049 / DSM 3752 / JCM 8966 / VKM B-1809) (Halobacterium marismortui)).